Reading from the N-terminus, the 452-residue chain is Glutamyl-tRNA(Gln) amidotransferase subunit A (452 aa).

Residues Lys-56 and Ser-131 each act as charge relay system in the active site. The active-site Acyl-ester intermediate is Ser-155.

Belongs to the amidase family. GatA subfamily. Heterotrimer of A, B and C subunits.

The enzyme catalyses L-glutamyl-tRNA(Gln) + L-glutamine + ATP + H2O = L-glutaminyl-tRNA(Gln) + L-glutamate + ADP + phosphate + H(+). In terms of biological role, allows the formation of correctly charged Gln-tRNA(Gln) through the transamidation of misacylated Glu-tRNA(Gln) in organisms which lack glutaminyl-tRNA synthetase. The reaction takes place in the presence of glutamine and ATP through an activated gamma-phospho-Glu-tRNA(Gln). This chain is Glutamyl-tRNA(Gln) amidotransferase subunit A, found in Campylobacter curvus (strain 525.92).